The primary structure comprises 167 residues: Peptidoglycan L-alanyl-D-glutamate endopeptidase CwlK (167 aa).

Residues 1–26 (MNLPAKTFVILCILFLLDLCFSYIRH) form the signal peptide.

Belongs to the peptidase M15C family.

It is found in the cell membrane. Functionally, cleaves the linkage of the L-alanine-D-glutamic acid of B.subtilis cell wall. In Bacillus subtilis (strain 168), this protein is Peptidoglycan L-alanyl-D-glutamate endopeptidase CwlK (cwlK).